The sequence spans 161 residues: RNA pyrophosphohydrolase (161 aa).

One can recognise a Nudix hydrolase domain in the interval 6 to 149 (GFRPNVGIIL…KRDVYRKAMV (144 aa)). The short motif at 38-59 (GGIQFGETPEQALFRELREEIG) is the Nudix box element.

The protein belongs to the Nudix hydrolase family. RppH subfamily. A divalent metal cation serves as cofactor.

Its function is as follows. Accelerates the degradation of transcripts by removing pyrophosphate from the 5'-end of triphosphorylated RNA, leading to a more labile monophosphorylated state that can stimulate subsequent ribonuclease cleavage. This Acinetobacter baumannii (strain AB307-0294) protein is RNA pyrophosphohydrolase.